A 206-amino-acid polypeptide reads, in one-letter code: MLEARDVVCIRDEHVLFSALSFTASSGEMVQIAGANGVGKTSLLRMLSGLATPESGDVCWQGQRINRIREHFNQQLLWLGHQPGIKSVLTGEENLRFFYPQQHQDAHWQALAAVGLAGYEDVPVARLSAGQQRRVALARLWLTDVPLWILDEPLTALDVAGVEMLTQRMEHHIAHGGIIILTTHQPLRPFAQSIRCIQLTPSEGTP.

Residues 2–206 (LEARDVVCIR…IQLTPSEGTP (205 aa)) form the ABC transporter domain. Position 34–41 (34–41 (GANGVGKT)) interacts with ATP.

The protein belongs to the ABC transporter superfamily. CcmA exporter (TC 3.A.1.107) family. The complex is composed of two ATP-binding proteins (CcmA) and two transmembrane proteins (CcmB).

The protein localises to the cell inner membrane. The catalysed reaction is heme b(in) + ATP + H2O = heme b(out) + ADP + phosphate + H(+). Functionally, part of the ABC transporter complex CcmAB involved in the biogenesis of c-type cytochromes; once thought to export heme, this seems not to be the case, but its exact role is uncertain. Responsible for energy coupling to the transport system. The protein is Cytochrome c biogenesis ATP-binding export protein CcmA of Pectobacterium atrosepticum (strain SCRI 1043 / ATCC BAA-672) (Erwinia carotovora subsp. atroseptica).